We begin with the raw amino-acid sequence, 779 residues long: Potassium/sodium hyperpolarization-activated cyclic nucleotide-gated channel 3 (779 aa).

The tract at residues 1–47 is disordered; sequence MEEEARPAAGAGEAATPARETPPAAPAQARAASGGVPESAPEPKRRQ. Over 1 to 96 the chain is Cytoplasmic; it reads MEEEARPAAG…PYSDFRFYWD (96 aa). A compositionally biased stretch (low complexity) spans 7-32; the sequence is PAAGAGEAATPARETPPAAPAQARAA. The tract at residues 45 to 90 is involved in subunit assembly; sequence RRQLGTLLQPTVNKFSLRVFGSHKAVEIEQERVKSAGAWIIHPYSD. The chain crosses the membrane as a helical span at residues 97–117; it reads LIMLLLMVGNLIVLPVGITFF. Residues 118 to 123 lie on the Extracellular side of the membrane; that stretch reads KEENSP. Residues 124–144 form a helical membrane-spanning segment; that stretch reads PWIVFNVLSDTFFLLDLVLNF. Residues 145–170 lie on the Cytoplasmic side of the membrane; that stretch reads RTGIVVEEGAEILLAPRAIRTRYLRT. The chain crosses the membrane as a helical span at residues 171–191; that stretch reads WFLVDLISSIPVDYIFLVVEL. Topologically, residues 192–200 are extracellular; that stretch reads EPRLDAEVY. The helical; Voltage-sensor transmembrane segment at 201 to 221 threads the bilayer; sequence KTARALRIVRFTKILSLLRLL. Topologically, residues 222–252 are cytoplasmic; the sequence is RLSRLIRYIHQWEEIFHMTYDLASAVVRIFN. Residues 253–273 form a helical membrane-spanning segment; that stretch reads LIGMMLLLCHWDGCLQFLVPM. Over 274–296 the chain is Extracellular; the sequence is LQDFPSDCWVSMNRMVNHSWGRQ. A glycan (N-linked (GlcNAc...) asparagine) is linked at Asn-290. The pore-forming intramembrane region spans 297-318; it reads YSHALFKAMSHMLCIGYGQQAP. The Extracellular segment spans residues 319 to 328; the sequence is VGMPDVWLTM. The chain crosses the membrane as a helical span at residues 329–349; that stretch reads LSMIVGATCYAMFIGHATALI. The Cytoplasmic segment spans residues 350-779; it reads QSLDSSRRQY…PRGPQISANM (430 aa). Residues 353–779 form an interaction with KCTD3 region; that stretch reads DSSRRQYQEK…PRGPQISANM (427 aa). Residues Gly-491, Glu-492, Cys-494, Arg-501, Thr-502, Arg-542, and Arg-545 each coordinate 3',5'-cyclic AMP. The tract at residues 549–569 is disordered; that stretch reads KNSILQRKRSEPSPGSSGGVM. Residue Ser-633 is modified to Phosphoserine. Over residues 687 to 697 the composition is skewed to polar residues; it reads SLSRTGRSQVS. Residues 687–779 form a disordered region; the sequence is SLSRTGRSQV…PRGPQISANM (93 aa).

The protein belongs to the potassium channel HCN family. As to quaternary structure, homotetramer. The potassium channel is composed of a homo- or heterotetrameric complex of pore-forming subunits. Interacts with HCN1. Interacts with KCTD3; this interaction increases cell surface expression and current density of this channel. Interacts with PEX5L. Detected in hypothalamus, amygdala, olfactory bulb, hippocampus and retina (at protein level). Highly expressed in brain and heart, in particular in ventricle, atrium and in sinoatrial node (SAN). Detected at low levels in skeletal muscle and lung. Expressed in DRG neurons.

Its subcellular location is the cell membrane. The enzyme catalyses K(+)(in) = K(+)(out). It catalyses the reaction Na(+)(in) = Na(+)(out). Its activity is regulated as follows. Unlike HCN2 and HCN4, HCN3 is insensitive to cyclic nucleotides, such as cAMP or cGMP. This lack of sensitivity of HCN3, despite harboring a functional cyclic nucleotide-binding domain (CNBD), may be explained by its shorter C-terminal sequence, which may alter the normal autoinhibition of the channel. Inhibited by Cs(1+) and ivabradine. Phosphatidylinositol-4,5-bisphosphate (PIP(2)) shifts HCN3 activation to more depolarized potentials and accelerated activation kinetics. Its function is as follows. Hyperpolarization-activated ion channel that are permeable to sodium and potassium ions, with an about 3:1 preference for potassium ions. Contributes to the native pacemaker currents in heart (If) and in neurons (Ih). In particular, plays a pivotal role in maintaining excitability and promoting rhythmic burst firing within hypothalamic nuclei. Exerts a significant influence on the configuration of the cardiac action potential waveform. Does not appear to play a prominent role in the processing of acute, neuropathic, or inflammatory pain. The protein is Potassium/sodium hyperpolarization-activated cyclic nucleotide-gated channel 3 (Hcn3) of Mus musculus (Mouse).